A 326-amino-acid chain; its full sequence is Phospho-N-acetylmuramoyl-pentapeptide-transferase (326 aa).

The next 9 helical transmembrane spans lie at 3–23 (ISIS…PAFI), 51–71 (TMGG…FALF), 79–99 (VGMI…DDFL), 115–135 (LALQ…GGDI), 138–158 (VFGY…FWLV), 169–189 (GVDG…GVIA), 195–215 (MDIL…FIFN), 221–243 (VFMG…MALH), and 306–326 (FFFW…LYLM).

It belongs to the glycosyltransferase 4 family. MraY subfamily. The cofactor is Mg(2+).

Its subcellular location is the cell membrane. It catalyses the reaction UDP-N-acetyl-alpha-D-muramoyl-L-alanyl-gamma-D-glutamyl-L-lysyl-D-alanyl-D-alanine + di-trans,octa-cis-undecaprenyl phosphate = Mur2Ac(oyl-L-Ala-gamma-D-Glu-L-Lys-D-Ala-D-Ala)-di-trans,octa-cis-undecaprenyl diphosphate + UMP. It participates in cell wall biogenesis; peptidoglycan biosynthesis. Catalyzes the initial step of the lipid cycle reactions in the biosynthesis of the cell wall peptidoglycan: transfers peptidoglycan precursor phospho-MurNAc-pentapeptide from UDP-MurNAc-pentapeptide onto the lipid carrier undecaprenyl phosphate, yielding undecaprenyl-pyrophosphoryl-MurNAc-pentapeptide, known as lipid I. This chain is Phospho-N-acetylmuramoyl-pentapeptide-transferase, found in Streptococcus pneumoniae serotype 19F (strain G54).